A 160-amino-acid chain; its full sequence is D-aminoacyl-tRNA deacylase (160 aa).

A Gly-cisPro motif, important for rejection of L-amino acids motif is present at residues 146 to 147 (GP).

The protein belongs to the DTD family. Homodimer.

It localises to the cytoplasm. It catalyses the reaction glycyl-tRNA(Ala) + H2O = tRNA(Ala) + glycine + H(+). The catalysed reaction is a D-aminoacyl-tRNA + H2O = a tRNA + a D-alpha-amino acid + H(+). Functionally, an aminoacyl-tRNA editing enzyme that deacylates mischarged D-aminoacyl-tRNAs. Also deacylates mischarged glycyl-tRNA(Ala), protecting cells against glycine mischarging by AlaRS. Acts via tRNA-based rather than protein-based catalysis; rejects L-amino acids rather than detecting D-amino acids in the active site. By recycling D-aminoacyl-tRNA to D-amino acids and free tRNA molecules, this enzyme counteracts the toxicity associated with the formation of D-aminoacyl-tRNA entities in vivo and helps enforce protein L-homochirality. The chain is D-aminoacyl-tRNA deacylase from Desulfovibrio desulfuricans (strain ATCC 27774 / DSM 6949 / MB).